The chain runs to 1363 residues: DNA-directed RNA polymerase subunit beta' (1363 aa).

Residues 1–39 (MTSTPSKSRKSSKGSKAAKAAASAPETRPLAKTPPPFRN) are disordered. A compositionally biased stretch (low complexity) spans 14–24 (GSKAAKAAASA). 4 residues coordinate Zn(2+): C248, C315, C322, and C325.

It belongs to the RNA polymerase beta' chain family. RpoC2 subfamily. As to quaternary structure, in cyanobacteria the RNAP catalytic core is composed of 2 alpha, 1 beta, 1 beta', 1 gamma and 1 omega subunit. When a sigma factor is associated with the core the holoenzyme is formed, which can initiate transcription. Zn(2+) serves as cofactor.

The catalysed reaction is RNA(n) + a ribonucleoside 5'-triphosphate = RNA(n+1) + diphosphate. DNA-dependent RNA polymerase catalyzes the transcription of DNA into RNA using the four ribonucleoside triphosphates as substrates. The protein is DNA-directed RNA polymerase subunit beta' of Synechococcus sp. (strain WH7803).